We begin with the raw amino-acid sequence, 96 residues long: Antitoxin TacA3 (96 aa).

The segment at 61 to 96 (YLTERDTKMIMEILDNPPAPNEKLLAAAFALPDMKK) is neutralization domain.

The protein belongs to the TacA antitoxin family. As to quaternary structure, forms a complex with cognate toxin TacT3. Forms a 4:2 antitoxin:toxin complex with cognate toxin TacT3. Forms a 4:4 antitoxin:toxin complex with promoter DNA, where 2 TacT3 dimers bridge 2 TacA3 dimers. Only TacA3 contacts promoter DNA.

In terms of biological role, antitoxin component of a type II toxin-antitoxin (TA) system. Counteracts the toxic effect of cognate toxin TacT3, but not TacT1 or TacT2. Plays a role in persister cell formation. Its function is as follows. The TacA3-TacT3 complex both represses and derepresses expression of its own operon. The hexameric 4:2 TacA3-TacT3 complex binds promoter DNA and represses its transcription; both subunits are required. The octomeric 4:4 TacA3-TacT3 complex derepresses the operon. The shift from hexameric to octomeric complex probably alters DNA-binding, leading to dissociation from the operator DNA and derepression. Does not bind the promoter of the TacA1-TacT1 operon. This is Antitoxin TacA3 from Salmonella typhimurium (strain 14028s / SGSC 2262).